A 596-amino-acid chain; its full sequence is Putative terpenoid synthase 5 (596 aa).

Mg(2+) is bound by residues Asp-349, Asp-353, Asn-481, and Asp-489. The DDXXD motif motif lies at Asp-349–Asp-353.

This sequence belongs to the terpene synthase family. Tpsa subfamily. Requires Mg(2+) as cofactor. Mn(2+) serves as cofactor.

The protein resides in the cytoplasm. The protein operates within secondary metabolite biosynthesis; terpenoid biosynthesis. The chain is Putative terpenoid synthase 5 (TPS05) from Arabidopsis thaliana (Mouse-ear cress).